Consider the following 270-residue polypeptide: 4-hydroxy-tetrahydrodipicolinate reductase (270 aa).

NAD(+)-binding positions include 9–14 (GAGGRM) and Glu35. Position 36 (Arg36) interacts with NADP(+). NAD(+) is bound by residues 99 to 101 (GTT) and 123 to 126 (ASNF). The Proton donor/acceptor role is filled by His156. His157 contributes to the (S)-2,3,4,5-tetrahydrodipicolinate binding site. The active-site Proton donor is the Lys160. Position 166-167 (166-167 (GT)) interacts with (S)-2,3,4,5-tetrahydrodipicolinate.

The protein belongs to the DapB family.

It localises to the cytoplasm. It catalyses the reaction (S)-2,3,4,5-tetrahydrodipicolinate + NAD(+) + H2O = (2S,4S)-4-hydroxy-2,3,4,5-tetrahydrodipicolinate + NADH + H(+). The enzyme catalyses (S)-2,3,4,5-tetrahydrodipicolinate + NADP(+) + H2O = (2S,4S)-4-hydroxy-2,3,4,5-tetrahydrodipicolinate + NADPH + H(+). Its pathway is amino-acid biosynthesis; L-lysine biosynthesis via DAP pathway; (S)-tetrahydrodipicolinate from L-aspartate: step 4/4. Catalyzes the conversion of 4-hydroxy-tetrahydrodipicolinate (HTPA) to tetrahydrodipicolinate. The protein is 4-hydroxy-tetrahydrodipicolinate reductase of Haemophilus influenzae (strain ATCC 51907 / DSM 11121 / KW20 / Rd).